The following is a 1574-amino-acid chain: Sterol 3-beta-glucosyltransferase (1574 aa).

Polar residues predominate over residues 37–48 (TFLNQNPASPNN). Disordered regions lie at residues 37–61 (TFLN…NKDE) and 102–170 (ASNA…HSKL). Composition is skewed to basic and acidic residues over residues 107–121 (EAKD…RSSR) and 128–138 (PEYRREYKLDY). The span at 139 to 148 (DIDESEEDDI) shows a compositional bias: acidic residues. A compositionally biased stretch (basic and acidic residues) spans 149–170 (ESTRDENTLKPKTEDTSVHSKL). The region spanning 253–288 (DKLKRVFELNDDDYFYGNYNVWLVRDVLLQGHIYLT) is the GRAM 1 domain. One can recognise a PH domain in the interval 323 to 471 (DVIQSGSLGM…WVNNIVKVVF (149 aa)). 4 disordered regions span residues 389–413 (GRND…SGDE), 538–559 (RMKK…GNEP), 651–722 (ASHR…PVQG), and 774–806 (DALS…KKKN). The segment covering 692 to 701 (ITPSKIFSNK) has biased composition (polar residues). The span at 702–711 (SRTESEKSTP) shows a compositional bias: basic and acidic residues. Positions 712-722 (DRSQTTSPVQG) are enriched in polar residues. The GRAM 2 domain occupies 854-920 (RHFQERFSFN…IDVDTCSKEK (67 aa)). Basic and acidic residues predominate over residues 964–976 (RESGNESSDDNKS). The segment at 964–996 (RESGNESSDDNKSAQHGKSGCFQKTPSSAETTK) is disordered. Residues 985 to 996 (FQKTPSSAETTK) show a composition bias toward polar residues. Residues S1057, R1058, D1060, N1333, I1364, H1366, H1379, S1382, G1383, T1384, D1403, and Q1404 each coordinate UDP-alpha-D-glucose. The tract at residues 1505-1574 (DSDTYDADHD…DNTTVTDANK (70 aa)) is disordered. The span at 1510–1533 (DADHDSDKESDHDQTYEQDNHSDY) shows a compositional bias: basic and acidic residues. The span at 1563–1574 (GNDNTTVTDANK) shows a compositional bias: polar residues.

It belongs to the glycosyltransferase 28 family.

It is found in the cytoplasm. Its subcellular location is the membrane. The catalysed reaction is a sterol + UDP-alpha-D-glucose = a sterol 3-beta-D-glucoside + UDP + H(+). It catalyses the reaction ergosterol + UDP-alpha-D-glucose = ergosteryl 3-beta-D-glucoside + UDP + H(+). Functionally, sterol glycosyltransferase responsible for the glycosylation of ergosterol to form ergosterol-glucoside. The protein is Sterol 3-beta-glucosyltransferase of Debaryomyces hansenii (strain ATCC 36239 / CBS 767 / BCRC 21394 / JCM 1990 / NBRC 0083 / IGC 2968) (Yeast).